The following is a 512-amino-acid chain: GMP synthase [glutamine-hydrolyzing] (512 aa).

Positions 9–198 constitute a Glutamine amidotransferase type-1 domain; it reads GVLVVDFGGQ…WLSLVGAPRT (190 aa). The Nucleophile role is filled by Cys87. Residues His173 and Glu175 contribute to the active site. The region spanning 199 to 387 is the GMPS ATP-PPase domain; the sequence is WRPGDMVSEL…LGVPRELIWK (189 aa). Position 226-232 (226-232) interacts with ATP; it reads SGGVDST.

It carries out the reaction XMP + L-glutamine + ATP + H2O = GMP + L-glutamate + AMP + diphosphate + 2 H(+). It functions in the pathway purine metabolism; GMP biosynthesis; GMP from XMP (L-Gln route): step 1/1. Its function is as follows. Catalyzes the synthesis of GMP from XMP. The protein is GMP synthase [glutamine-hydrolyzing] (guaA) of Aeropyrum pernix (strain ATCC 700893 / DSM 11879 / JCM 9820 / NBRC 100138 / K1).